The chain runs to 409 residues: Gamma-glutamyl phosphate reductase (409 aa).

This sequence belongs to the gamma-glutamyl phosphate reductase family.

The protein localises to the cytoplasm. The enzyme catalyses L-glutamate 5-semialdehyde + phosphate + NADP(+) = L-glutamyl 5-phosphate + NADPH + H(+). It functions in the pathway amino-acid biosynthesis; L-proline biosynthesis; L-glutamate 5-semialdehyde from L-glutamate: step 2/2. In terms of biological role, catalyzes the NADPH-dependent reduction of L-glutamate 5-phosphate into L-glutamate 5-semialdehyde and phosphate. The product spontaneously undergoes cyclization to form 1-pyrroline-5-carboxylate. The sequence is that of Gamma-glutamyl phosphate reductase from Bartonella tribocorum (strain CIP 105476 / IBS 506).